Reading from the N-terminus, the 156-residue chain is Aspartate carbamoyltransferase regulatory chain (156 aa).

Zn(2+)-binding residues include C109, C114, C138, and C141.

Belongs to the PyrI family. As to quaternary structure, contains catalytic and regulatory chains. It depends on Zn(2+) as a cofactor.

Its function is as follows. Involved in allosteric regulation of aspartate carbamoyltransferase. The sequence is that of Aspartate carbamoyltransferase regulatory chain from Baumannia cicadellinicola subsp. Homalodisca coagulata.